Here is a 400-residue protein sequence, read N- to C-terminus: CinA-like protein (400 aa).

The protein belongs to the CinA family.

The polypeptide is CinA-like protein (Escherichia coli (strain SMS-3-5 / SECEC)).